Consider the following 214-residue polypeptide: MISFLRGPVAHIGLSAAVIDVGGVGMLVQATPKTLGTLRLGQESTLTTAMIVREDSMTLYGFADPDEREVFEILLTVSGIGPRLGLAVLAVLEPETIRVATSTGDGKTFTKVPGIGPKVAGRIVLELAGKLVPHGTVNGAPASPSAQWKPQVVAAMTSLGWSEKDALASVEKATADSPELISDGNVAEILRTTLRWLGQDGARTSAGRQVTARG.

Positions M1–A63 are domain I. The segment at D64–G139 is domain II. The segment at G139 to S143 is flexible linker. Residues P144–G214 are domain III.

The protein belongs to the RuvA family. Homotetramer. Forms an RuvA(8)-RuvB(12)-Holliday junction (HJ) complex. HJ DNA is sandwiched between 2 RuvA tetramers; dsDNA enters through RuvA and exits via RuvB. An RuvB hexamer assembles on each DNA strand where it exits the tetramer. Each RuvB hexamer is contacted by two RuvA subunits (via domain III) on 2 adjacent RuvB subunits; this complex drives branch migration. In the full resolvosome a probable DNA-RuvA(4)-RuvB(12)-RuvC(2) complex forms which resolves the HJ.

It localises to the cytoplasm. Its function is as follows. The RuvA-RuvB-RuvC complex processes Holliday junction (HJ) DNA during genetic recombination and DNA repair, while the RuvA-RuvB complex plays an important role in the rescue of blocked DNA replication forks via replication fork reversal (RFR). RuvA specifically binds to HJ cruciform DNA, conferring on it an open structure. The RuvB hexamer acts as an ATP-dependent pump, pulling dsDNA into and through the RuvAB complex. HJ branch migration allows RuvC to scan DNA until it finds its consensus sequence, where it cleaves and resolves the cruciform DNA. This chain is Holliday junction branch migration complex subunit RuvA, found in Renibacterium salmoninarum (strain ATCC 33209 / DSM 20767 / JCM 11484 / NBRC 15589 / NCIMB 2235).